The sequence spans 180 residues: Succinate dehydrogenase cytochrome B subunit, mitochondrial (180 aa).

The Mitochondrial matrix portion of the chain corresponds to 1–82; the sequence is MFATRSFCLS…WYLSSLHRIT (82 aa). A helical membrane pass occupies residues 83 to 103; sequence GCVVAGTLYAFAMGYLVAPLA. The Mitochondrial intermembrane portion of the chain corresponds to 104–122; it reads GYSLDTATISGLIQQVPTW. A helical transmembrane segment spans residues 123–143; sequence IKVPAKFVISYPLTFHIFNGI. Heme is bound at residue H138. Topologically, residues 144–159 are mitochondrial matrix; the sequence is RHLIWDTTKELSLKGV. Residues 160-180 form a helical membrane-spanning segment; sequence YRTGYAVLALSVLTSGYFAMI.

Belongs to the cytochrome b560 family. Forms part of complex II containing four subunits: a 70 kDa flavoprotein (FP), a 27 kDa iron-sulfur protein (IP), a cytochrome B and a membrane-anchoring protein. Heme is required as a cofactor.

It is found in the mitochondrion inner membrane. Its pathway is carbohydrate metabolism; tricarboxylic acid cycle. Membrane-anchoring subunit of succinate dehydrogenase (SDH) that is involved in complex II of the mitochondrial electron transport chain and is responsible for transferring electrons from succinate to ubiquinone (coenzyme Q). This Schizosaccharomyces pombe (strain 972 / ATCC 24843) (Fission yeast) protein is Succinate dehydrogenase cytochrome B subunit, mitochondrial (sdh3).